The chain runs to 308 residues: Quinolinate synthase (308 aa).

Histidine 21 and serine 38 together coordinate iminosuccinate. Cysteine 83 is a [4Fe-4S] cluster binding site. Iminosuccinate is bound by residues 109–111 and serine 126; that span reads YIN. Cysteine 170 is a [4Fe-4S] cluster binding site. Iminosuccinate is bound by residues 196–198 and threonine 213; that span reads HPE. Cysteine 263 is a binding site for [4Fe-4S] cluster.

The protein belongs to the quinolinate synthase family. Type 2 subfamily. [4Fe-4S] cluster serves as cofactor.

It is found in the cytoplasm. It catalyses the reaction iminosuccinate + dihydroxyacetone phosphate = quinolinate + phosphate + 2 H2O + H(+). The protein operates within cofactor biosynthesis; NAD(+) biosynthesis; quinolinate from iminoaspartate: step 1/1. Functionally, catalyzes the condensation of iminoaspartate with dihydroxyacetone phosphate to form quinolinate. The protein is Quinolinate synthase of Sulfurisphaera tokodaii (strain DSM 16993 / JCM 10545 / NBRC 100140 / 7) (Sulfolobus tokodaii).